The following is a 141-amino-acid chain: Hemoglobin subunit alpha-2 (141 aa).

Residues 1-141 (VLTDAERKEV…VATVLTSKYR (141 aa)) form the Globin domain. His58 serves as a coordination point for O2. Residue His87 participates in heme b binding.

The protein belongs to the globin family. In terms of assembly, heterotetramer of two alpha chains and two beta chains. Red blood cells.

Functionally, involved in oxygen transport from the lung to the various peripheral tissues. This Tachyglossus aculeatus aculeatus (Southeast Australian short-beaked echidna) protein is Hemoglobin subunit alpha-2.